We begin with the raw amino-acid sequence, 225 residues long: MRIQLLLVATLVASIVATRVEDMATFRTEKQWQQDLQYRREFVKRQLAPKPKSNIVVSHTVSCVIDGGNMTSVWRFEGQFNPHIASEVILHDTSGLYNVPHEIQNDGQVLTVTVKRSAPADIAKVLISLKPVQLSSGQYECRPQLQLPWVPRPSSFMYDSYRLWYEKRWLTIILYVFMWTYLVTLLQYCIVRFIGTRLFYFLQRNITIRFTGKPTYNLLTYPVKG.

The first 17 residues, 1 to 17 (MRIQLLLVATLVASIVA), serve as a signal peptide directing secretion. Residues 18–170 (TRVEDMATFR…YRLWYEKRWL (153 aa)) are Lumenal-facing. The 92-residue stretch at 54 to 145 (NIVVSHTVSC…SGQYECRPQL (92 aa)) folds into the Ig-like H-type domain. Cysteines 63 and 141 form a disulfide. N-linked (GlcNAc...) asparagine; by host glycosylation occurs at Asn-69. The chain crosses the membrane as a helical span at residues 171–191 (TIILYVFMWTYLVTLLQYCIV). Topologically, residues 192–225 (RFIGTRLFYFLQRNITIRFTGKPTYNLLTYPVKG) are cytoplasmic.

It belongs to the cytomegalovirus US6 family.

It is found in the host endoplasmic reticulum membrane. The sequence is that of Unique short US7 glycoprotein (US7) from Human cytomegalovirus (strain AD169) (HHV-5).